A 218-amino-acid polypeptide reads, in one-letter code: ATP-dependent dethiobiotin synthetase BioD (218 aa).

Residue 9-15 (TNAGKTT) participates in ATP binding. T14 lines the Mg(2+) pocket. Residue K35 is part of the active site. K35 provides a ligand contact to phosphate. A substrate-binding site is contributed by T39. ATP-binding positions include D50, E116, and 116–119 (EGAG). Residues D50 and E116 each contribute to the Mg(2+) site. 116 to 119 (EGAG) contacts phosphate. Position 151–154 (151–154 (GLIN)) interacts with substrate. ATP-binding positions include N175 and 175 to 177 (NLK).

Belongs to the dethiobiotin synthetase family. In terms of assembly, homodimer. Mg(2+) serves as cofactor.

It is found in the cytoplasm. The enzyme catalyses (7R,8S)-7,8-diammoniononanoate + CO2 + ATP = (4R,5S)-dethiobiotin + ADP + phosphate + 3 H(+). It participates in cofactor biosynthesis; biotin biosynthesis; biotin from 7,8-diaminononanoate: step 1/2. In terms of biological role, catalyzes a mechanistically unusual reaction, the ATP-dependent insertion of CO2 between the N7 and N8 nitrogen atoms of 7,8-diaminopelargonic acid (DAPA, also called 7,8-diammoniononanoate) to form a ureido ring. The polypeptide is ATP-dependent dethiobiotin synthetase BioD (Helicobacter pylori (strain ATCC 700392 / 26695) (Campylobacter pylori)).